Reading from the N-terminus, the 119-residue chain is Large ribosomal subunit protein uL18 (119 aa).

Belongs to the universal ribosomal protein uL18 family. Part of the 50S ribosomal subunit; part of the 5S rRNA/L5/L18/L25 subcomplex. Contacts the 5S and 23S rRNAs.

In terms of biological role, this is one of the proteins that bind and probably mediate the attachment of the 5S RNA into the large ribosomal subunit, where it forms part of the central protuberance. This is Large ribosomal subunit protein uL18 from Chlorobaculum tepidum (strain ATCC 49652 / DSM 12025 / NBRC 103806 / TLS) (Chlorobium tepidum).